The following is a 246-amino-acid chain: Proteasome subunit alpha type-6 (246 aa).

This sequence belongs to the peptidase T1A family. The 26S proteasome consists of a 20S proteasome core and two 19S regulatory subunits. The 20S proteasome core is composed of 28 subunits that are arranged in four stacked rings, resulting in a barrel-shaped structure. The two end rings are each formed by seven alpha subunits, and the two central rings are each formed by seven beta subunits. The catalytic chamber with the active sites is on the inside of the barrel.

Its subcellular location is the cytoplasm. It localises to the nucleus. The proteasome is a multicatalytic proteinase complex which is characterized by its ability to cleave peptides with Arg, Phe, Tyr, Leu, and Glu adjacent to the leaving group at neutral or slightly basic pH. The proteasome has an ATP-dependent proteolytic activity. This is Proteasome subunit alpha type-6 (PAA1) from Oryza sativa subsp. japonica (Rice).